A 469-amino-acid polypeptide reads, in one-letter code: Proline--tRNA ligase (469 aa).

Belongs to the class-II aminoacyl-tRNA synthetase family. ProS type 3 subfamily. Homodimer.

Its subcellular location is the cytoplasm. It carries out the reaction tRNA(Pro) + L-proline + ATP = L-prolyl-tRNA(Pro) + AMP + diphosphate. Functionally, catalyzes the attachment of proline to tRNA(Pro) in a two-step reaction: proline is first activated by ATP to form Pro-AMP and then transferred to the acceptor end of tRNA(Pro). The chain is Proline--tRNA ligase from Methanosphaera stadtmanae (strain ATCC 43021 / DSM 3091 / JCM 11832 / MCB-3).